Reading from the N-terminus, the 54-residue chain is Small polypeptide DEVIL 12 (54 aa).

The tract at residues 20 to 51 is required for DVL/RTFL small polypeptide activity; sequence NNKLTPNRSLKETRSRLYIIRRCLVMLLCWRE. Asparagine 26 carries an N-linked (GlcNAc...) asparagine glycan. Residues 31–48 form a helical membrane-spanning segment; sequence ETRSRLYIIRRCLVMLLC.

This sequence belongs to the DVL/RTFL small polypeptides family.

Its subcellular location is the cell membrane. Its function is as follows. Small polypeptide acting as a regulatory molecule which coordinates cellular responses required for differentiation, growth and development, probably by restricting polar cell proliferation in lateral organs and coordinating socket cell recruitment and differentiation at trichome sites. The sequence is that of Small polypeptide DEVIL 12 from Arabidopsis thaliana (Mouse-ear cress).